Here is a 453-residue protein sequence, read N- to C-terminus: Probable 1,4-beta-D-glucan cellobiohydrolase A (453 aa).

The signal sequence occupies residues 1-17 (MYQRALLFSALATAVSA). E226 functions as the Nucleophile in the catalytic mechanism. The active-site Proton donor is E231. An N-linked (GlcNAc...) asparagine glycan is attached at N284.

The protein belongs to the glycosyl hydrolase 7 (cellulase C) family.

It localises to the secreted. It carries out the reaction Hydrolysis of (1-&gt;4)-beta-D-glucosidic linkages in cellulose and cellotetraose, releasing cellobiose from the non-reducing ends of the chains.. Its function is as follows. The biological conversion of cellulose to glucose generally requires three types of hydrolytic enzymes: (1) Endoglucanases which cut internal beta-1,4-glucosidic bonds; (2) Exocellobiohydrolases that cut the disaccharide cellobiose from the non-reducing end of the cellulose polymer chain; (3) Beta-1,4-glucosidases which hydrolyze the cellobiose and other short cello-oligosaccharides to glucose. This is Probable 1,4-beta-D-glucan cellobiohydrolase A (cbhA) from Aspergillus clavatus (strain ATCC 1007 / CBS 513.65 / DSM 816 / NCTC 3887 / NRRL 1 / QM 1276 / 107).